Reading from the N-terminus, the 105-residue chain is Circadian clock oscillator protein KaiB (105 aa).

This sequence belongs to the KaiB family. As to quaternary structure, may undergo a major conformational rearrangment; in the free state forms homooligomers. When bound to KaiC switches to a monomeric thioredoxin-fold (KaiB(fs)). The active oscillator complex is probably KaiC(6):KaiB(6).

In terms of biological role, component of the KaiBC clock protein complex, which constitutes the main circadian regulator in cyanobacteria; it may modify the ATPase activity of KaiC. May be a metamorphic protein which reversibly switches between an inactive tetrameric fold and a rare, thioredoxin-like monomeric fold (KaiB(fs)). KaiB(fs) binds phospho-KaiC, and perhaps clock output effectors. This is Circadian clock oscillator protein KaiB from Prochlorococcus marinus (strain MIT 9312).